The sequence spans 288 residues: ATP synthase gamma chain (288 aa).

It belongs to the ATPase gamma chain family. In terms of assembly, F-type ATPases have 2 components, CF(1) - the catalytic core - and CF(0) - the membrane proton channel. CF(1) has five subunits: alpha(3), beta(3), gamma(1), delta(1), epsilon(1). CF(0) has three main subunits: a, b and c.

Its subcellular location is the cell membrane. Functionally, produces ATP from ADP in the presence of a proton gradient across the membrane. The gamma chain is believed to be important in regulating ATPase activity and the flow of protons through the CF(0) complex. The chain is ATP synthase gamma chain from Symbiobacterium thermophilum (strain DSM 24528 / JCM 14929 / IAM 14863 / T).